Consider the following 1041-residue polypeptide: Protein SMAX1-like (1041 aa).

A Clp R domain is found at 8–188; that stretch reads IQQTLTPEAA…KSIIEQSLSA (181 aa). Repeat stretches follow at residues 12 to 98 and 117 to 188; these read LTPE…LDRL and VSNA…SLSA. The segment covering 189 to 205 has biased composition (low complexity); that stretch reads PSPCPSAAASTTTAGPG. 3 disordered regions span residues 189–214, 482–513, and 889–913; these read PSPC…PSPL, EAEQ…QNKA, and EGSH…VKRS. A compositionally biased stretch (basic and acidic residues) spans 482 to 495; sequence EAEQTDKPASRPEA. Over residues 891-900 the composition is skewed to polar residues; the sequence is SHNSSDVSVE.

Belongs to the ClpA/ClpB family.

May act downstream of MAX2 to negatively regulate karrikins/strigolactone responses. Acts probably specifically in the karrikin pathway. May function in a transcriptional corepressor complex. The sequence is that of Protein SMAX1-like from Oryza sativa subsp. japonica (Rice).